Reading from the N-terminus, the 234-residue chain is 7-cyano-7-deazaguanine synthase (234 aa).

15–25 serves as a coordination point for ATP; that stretch reads LSGGLDSSTCL. Positions 199, 208, 211, and 214 each coordinate Zn(2+).

The protein belongs to the QueC family. Requires Zn(2+) as cofactor.

The enzyme catalyses 7-carboxy-7-deazaguanine + NH4(+) + ATP = 7-cyano-7-deazaguanine + ADP + phosphate + H2O + H(+). The protein operates within purine metabolism; 7-cyano-7-deazaguanine biosynthesis. Functionally, catalyzes the ATP-dependent conversion of 7-carboxy-7-deazaguanine (CDG) to 7-cyano-7-deazaguanine (preQ(0)). The protein is 7-cyano-7-deazaguanine synthase of Anaeromyxobacter dehalogenans (strain 2CP-C).